Consider the following 465-residue polypeptide: Catalase cnsD (465 aa).

H39 is an active-site residue. Y331 is a heme binding site.

It belongs to the catalase family. Heme serves as cofactor.

It participates in alkaloid biosynthesis. Catalase; part of the gene cluster that mediates the biosynthesis of communesins, a prominent class of indole alkaloids with great potential as pharmaceuticals. Communesins are biosynthesized by the coupling of tryptamine and aurantioclavine, two building blocks derived from L-tryptophan. The L-tryptophan decarboxylase cnsB converts L-tryptophan to tryptamine, whereas the tryptophan dimethylallyltransferase cnsF converts L-tryptophan to 4-dimethylallyl tryptophan which is further transformed to aurantioclavine by the aurantioclavine synthase cnsA, probably aided by the catalase cnsD. The cytochrome P450 monooxygenase cnsC catalyzes the heterodimeric coupling between the two different indole moieties, tryptamine and aurantioclavine, to construct vicinal quaternary stereocenters and yield the heptacyclic communesin scaffold. The O-methyltransferase cnsE then methylates the communesin scaffold to produce communesin K, the simplest characterized communesin that contains the heptacyclic core. The dioxygenase cnsJ converts communesin K into communesin I. Acylation to introduce the hexadienyl group at position N16 of communesin I by the acyltransferase cnsK leads to the production of communesin B. The hexadienyl group is produced by the highly reducing polyketide synthase cnsI, before being hydrolytically removed from cnsI by the serine hydrolase cnsH, converted into hexadienyl-CoA by the CoA ligase cnsG, and then transferred to communesin I by cnsK. Surprisingly, cnsK may also be a promiscuous acyltransferase that can tolerate a range of acyl groups, including acetyl-, propionyl-, and butyryl-CoA, which lead to communesins A, G and H respectively. The roles of the alpha-ketoglutarate-dependent dioxygenases cnsM and cnsP have still to be determined. The polypeptide is Catalase cnsD (Penicillium expansum (Blue mold rot fungus)).